The primary structure comprises 514 residues: Lysine--tRNA ligase (514 aa).

Residues E422 and E429 each contribute to the Mg(2+) site.

This sequence belongs to the class-II aminoacyl-tRNA synthetase family. As to quaternary structure, homodimer. The cofactor is Mg(2+).

It is found in the cytoplasm. It carries out the reaction tRNA(Lys) + L-lysine + ATP = L-lysyl-tRNA(Lys) + AMP + diphosphate. In Psychrobacter arcticus (strain DSM 17307 / VKM B-2377 / 273-4), this protein is Lysine--tRNA ligase.